The chain runs to 178 residues: Arginine repressor (178 aa).

Positions 1-21 are disordered; it reads MSQAQENEHAGPAVPQTRTAR.

Belongs to the ArgR family.

The protein resides in the cytoplasm. It functions in the pathway amino-acid biosynthesis; L-arginine biosynthesis [regulation]. Regulates arginine biosynthesis genes. This chain is Arginine repressor, found in Streptomyces avermitilis (strain ATCC 31267 / DSM 46492 / JCM 5070 / NBRC 14893 / NCIMB 12804 / NRRL 8165 / MA-4680).